The primary structure comprises 219 residues: Thiamine-phosphate synthase (219 aa).

Residues 48 to 52 (QFRQK) and Asn-84 contribute to the 4-amino-2-methyl-5-(diphosphooxymethyl)pyrimidine site. Positions 85 and 104 each coordinate Mg(2+). Ser-123 provides a ligand contact to 4-amino-2-methyl-5-(diphosphooxymethyl)pyrimidine. 150–152 (TPS) contacts 2-[(2R,5Z)-2-carboxy-4-methylthiazol-5(2H)-ylidene]ethyl phosphate. Lys-153 is a 4-amino-2-methyl-5-(diphosphooxymethyl)pyrimidine binding site. Residues Gly-181 and 199 to 200 (IS) contribute to the 2-[(2R,5Z)-2-carboxy-4-methylthiazol-5(2H)-ylidene]ethyl phosphate site.

This sequence belongs to the thiamine-phosphate synthase family. Requires Mg(2+) as cofactor.

The catalysed reaction is 2-[(2R,5Z)-2-carboxy-4-methylthiazol-5(2H)-ylidene]ethyl phosphate + 4-amino-2-methyl-5-(diphosphooxymethyl)pyrimidine + 2 H(+) = thiamine phosphate + CO2 + diphosphate. The enzyme catalyses 2-(2-carboxy-4-methylthiazol-5-yl)ethyl phosphate + 4-amino-2-methyl-5-(diphosphooxymethyl)pyrimidine + 2 H(+) = thiamine phosphate + CO2 + diphosphate. It catalyses the reaction 4-methyl-5-(2-phosphooxyethyl)-thiazole + 4-amino-2-methyl-5-(diphosphooxymethyl)pyrimidine + H(+) = thiamine phosphate + diphosphate. The protein operates within cofactor biosynthesis; thiamine diphosphate biosynthesis; thiamine phosphate from 4-amino-2-methyl-5-diphosphomethylpyrimidine and 4-methyl-5-(2-phosphoethyl)-thiazole: step 1/1. Condenses 4-methyl-5-(beta-hydroxyethyl)thiazole monophosphate (THZ-P) and 2-methyl-4-amino-5-hydroxymethyl pyrimidine pyrophosphate (HMP-PP) to form thiamine monophosphate (TMP). This is Thiamine-phosphate synthase from Helicobacter pylori (strain ATCC 700392 / 26695) (Campylobacter pylori).